Here is a 336-residue protein sequence, read N- to C-terminus: Galactinol synthase 6 (336 aa).

Residue Lys106 is part of the active site. The Mn(2+) site is built by Asp122, Asp124, and His260.

Belongs to the glycosyltransferase 8 family. Galactosyltransferase subfamily. A divalent metal cation serves as cofactor.

The protein resides in the cytoplasm. The enzyme catalyses myo-inositol + UDP-alpha-D-galactose = alpha-D-galactosyl-(1-&gt;3)-1D-myo-inositol + UDP + H(+). Its function is as follows. Galactinol synthase involved in the biosynthesis of raffinose family oligosaccharides (RFOs) that function as osmoprotectants. May promote plant stress tolerance. In Arabidopsis thaliana (Mouse-ear cress), this protein is Galactinol synthase 6 (GOLS6).